A 116-amino-acid polypeptide reads, in one-letter code: CDKN2AIP N-terminal-like protein (116 aa).

Residue methionine 1 is modified to N-acetylmethionine. An XRN2-binding (XTBD) domain is found at alanine 24–serine 116.

It belongs to the CARF family. In terms of assembly, interacts with XRN2; the interaction is direct.

The sequence is that of CDKN2AIP N-terminal-like protein (CDKN2AIPNL) from Homo sapiens (Human).